Reading from the N-terminus, the 65-residue chain is Ubiquinol-cytochrome-c reductase complex assembly factor 6 (65 aa).

At 1-9 the chain is on the mitochondrial matrix side; sequence MPAGVSWPR. The helical; Signal-anchor for type II membrane protein transmembrane segment at 10–32 threads the bilayer; it reads YLRMFAASVLSMFAGAQVVHHYY. Residues 33 to 65 lie on the Mitochondrial intermembrane side of the membrane; sequence RPDLSIPEIPPKPGELRTELLGLKERQMDSQKQ.

Belongs to the UQCC6 family. In terms of tissue distribution, highly expressed in skeletal and cardiac muscle (at protein level).

It is found in the mitochondrion inner membrane. Its function is as follows. Required for the assembly and stability of the mitochondrial ubiquinol-cytochrome c reductase complex (complex III (CIII) or cytochrome b-c1 complex), a multisubunit transmembrane complex that is part of the mitochondrial electron transport chain (ETC) which drives oxidative phosphorylation. Mediates early complex III biogenesis. Participates in regulating the levels of electron transport chain proteins, and therefore energy supply, in response to changes in energy demand. Also required for cytochrome c oxidase complex (complex IV) assembly. This Danio rerio (Zebrafish) protein is Ubiquinol-cytochrome-c reductase complex assembly factor 6 (uqcc6).